The sequence spans 499 residues: NAD(P)H-quinone oxidoreductase chain 4, chloroplastic (499 aa).

A run of 14 helical transmembrane segments spans residues 4 to 24, 31 to 51, 87 to 107, 113 to 133, 134 to 154, 167 to 187, 211 to 231, 242 to 262, 274 to 294, 310 to 330, 331 to 351, 385 to 405, 416 to 436, and 462 to 482; these read FPWL…IPFL, IIRW…TYIF, IGLI…AWPV, LFYF…ASQD, ILLF…LLAM, FILY…IMAF, IIIY…IPFH, HYST…YGLI, SFFA…AALT, VSHM…GLNG, AILQ…LAGI, SLAL…LGVI, IIII…LLSM, and IFIL…PNFV.

This sequence belongs to the complex I subunit 4 family.

The protein localises to the plastid. Its subcellular location is the chloroplast thylakoid membrane. The catalysed reaction is a plastoquinone + NADH + (n+1) H(+)(in) = a plastoquinol + NAD(+) + n H(+)(out). It catalyses the reaction a plastoquinone + NADPH + (n+1) H(+)(in) = a plastoquinol + NADP(+) + n H(+)(out). In Marchantia polymorpha (Common liverwort), this protein is NAD(P)H-quinone oxidoreductase chain 4, chloroplastic (ndhD).